We begin with the raw amino-acid sequence, 568 residues long: Poly(A) polymerase (568 aa).

ATP-binding positions include 87 to 89, 99 to 102, 100 to 102, D154, K215, Y224, and 233 to 234; these read YGS, SDID, DID, and GV. Residues D100, D102, and D154 each contribute to the Mg(2+) site. Residues S452 and S550 each carry the phosphoserine modification. Residues 525-568 are disordered; it reads NEKRPSKKSKRKNLDARHETVKRSKSDAASGDNINGTTAAVDVN. A compositionally biased stretch (basic and acidic residues) spans 536 to 550; it reads KNLDARHETVKRSKS.

The protein belongs to the poly(A) polymerase family. As to quaternary structure, component of the cleavage and polyadenylation factor (CPF) complex, which is composed of PTI1, SYC1, SSU72, GLC7, MPE1, REF2, PFS2, PTA1, YSH1/BRR5, SWD2, CFT2/YDH1, YTH1, CFT1/YHH1, FIP1 and PAP1. Interacts with FIR1 and RRP6. Mg(2+) serves as cofactor. Requires Mn(2+) as cofactor.

It localises to the nucleus. It carries out the reaction RNA(n) + ATP = RNA(n)-3'-adenine ribonucleotide + diphosphate. In terms of biological role, polymerase component of the cleavage and polyadenylation factor (CPF) complex, which plays a key role in polyadenylation-dependent pre-mRNA 3'-end formation and cooperates with cleavage factors including the CFIA complex and NAB4/CFIB. The chain is Poly(A) polymerase (PAP1) from Saccharomyces cerevisiae (strain ATCC 204508 / S288c) (Baker's yeast).